A 75-amino-acid chain; its full sequence is uncharacterized protein (75 aa).

This is an uncharacterized protein from Escherichia coli (Bacteriophage T4).